Here is a 510-residue protein sequence, read N- to C-terminus: Probable cytochrome P450 4d20 (510 aa).

Position 455 (C455) interacts with heme.

The protein belongs to the cytochrome P450 family. Requires heme as cofactor.

It is found in the endoplasmic reticulum membrane. The protein resides in the microsome membrane. May be involved in the metabolism of insect hormones and in the breakdown of synthetic insecticides. The polypeptide is Probable cytochrome P450 4d20 (Cyp4d20) (Drosophila melanogaster (Fruit fly)).